The primary structure comprises 264 residues: 3-methyl-2-oxobutanoate hydroxymethyltransferase (264 aa).

Asp45 and Asp84 together coordinate Mg(2+). 3-methyl-2-oxobutanoate contacts are provided by residues 45 to 46, Asp84, and Lys112; that span reads DS. A Mg(2+)-binding site is contributed by Glu114. Glu181 (proton acceptor) is an active-site residue.

Belongs to the PanB family. As to quaternary structure, homodecamer; pentamer of dimers. Mg(2+) is required as a cofactor.

It is found in the cytoplasm. It catalyses the reaction 3-methyl-2-oxobutanoate + (6R)-5,10-methylene-5,6,7,8-tetrahydrofolate + H2O = 2-dehydropantoate + (6S)-5,6,7,8-tetrahydrofolate. Its pathway is cofactor biosynthesis; (R)-pantothenate biosynthesis; (R)-pantoate from 3-methyl-2-oxobutanoate: step 1/2. Its function is as follows. Catalyzes the reversible reaction in which hydroxymethyl group from 5,10-methylenetetrahydrofolate is transferred onto alpha-ketoisovalerate to form ketopantoate. The chain is 3-methyl-2-oxobutanoate hydroxymethyltransferase from Aeromonas salmonicida (strain A449).